A 182-amino-acid chain; its full sequence is Interferon beta (182 aa).

A signal peptide spans 1 to 21; the sequence is MNNRWILHAAFLLCFSTTALS. Residue Tyr-24 is modified to Phosphotyrosine. 3 N-linked (GlcNAc...) asparagine glycosylation sites follow: Asn-50, Asn-90, and Asn-97.

The protein belongs to the alpha/beta interferon family. Monomer. In terms of processing, this beta interferon does not have a disulfide bond.

It is found in the secreted. Type I interferon cytokine that plays a key role in the innate immune response to infection, developing tumors and other inflammatory stimuli. Signals via binding to high-affinity (IFNAR2) and low-affinity (IFNAR1) heterodimeric receptor, activating the canonical Jak-STAT signaling pathway resulting in transcriptional activation or repression of interferon-regulated genes that encode the effectors of the interferon response, such as antiviral proteins, regulators of cell proliferation and differentiation, and immunoregulatory proteins. Signals mostly via binding to a IFNAR1-IFNAR2 heterodimeric receptor, but can also function with IFNAR1 alone and independently of Jak-STAT pathways. Elicits a wide variety of responses, including antiviral and antibacterial activities, and can regulate the development of B-cells, myelopoiesis and lipopolysaccharide (LPS)-inducible production of tumor necrosis factor. Plays a role in neuronal homeostasis by regulating dopamine turnover and protecting dopaminergic neurons: acts by promoting neuronal autophagy and alpha-synuclein clearance, thereby preventing dopaminergic neuron loss. IFNB1 is more potent than interferon-alpha (IFN-alpha) in inducing the apoptotic and antiproliferative pathways required for control of tumor cell growth. The chain is Interferon beta from Mus musculus (Mouse).